The chain runs to 317 residues: Protein translocase subunit SecF (317 aa).

The next 6 helical transmembrane spans lie at 11–31 (FYLL…LFGL), 135–155 (RSIV…AFAF), 166–186 (ICAI…FAIL), 197–217 (LFVT…IVVF), 244–266 (LVRS…FFGG), and 276–298 (LLIG…LVSW).

It belongs to the SecD/SecF family. SecF subfamily. As to quaternary structure, forms a complex with SecD. Part of the essential Sec protein translocation apparatus which comprises SecA, SecYEG and auxiliary proteins SecDF. Other proteins may also be involved.

The protein resides in the cell membrane. In terms of biological role, part of the Sec protein translocase complex. Interacts with the SecYEG preprotein conducting channel. SecDF uses the proton motive force (PMF) to complete protein translocation after the ATP-dependent function of SecA. This chain is Protein translocase subunit SecF, found in Thermobaculum terrenum (strain ATCC BAA-798 / CCMEE 7001 / YNP1).